Here is a 416-residue protein sequence, read N- to C-terminus: Homeobox even-skipped homolog protein 1 (416 aa).

2 disordered regions span residues 30-120 and 138-178; these read AVSS…SDFY and YQHS…LACS. The span at 72 to 82 shows a compositional bias: low complexity; it reads GLAGSAAGLGA. Positions 102 to 114 are enriched in polar residues; sequence DSLSGQGQPSSSD. The homeobox DNA-binding region spans 183-242; sequence MRRYRTAFTREQIARLEKEFYRENYVSRPRRCELAAALNLPETTIKVWFQNRRMKDKRQR.

The protein belongs to the even-skipped homeobox family.

It is found in the nucleus. Functionally, may play a role in the specification of neuronal cell types. May play a role in the dorsoventral specification of mesodermal cell fate. This is Homeobox even-skipped homolog protein 1 (Evx1) from Mus musculus (Mouse).